Here is a 156-residue protein sequence, read N- to C-terminus: Hydrogenase 3 maturation protease (156 aa).

Ni(2+) contacts are provided by Asp-16, Asp-62, and His-90.

Belongs to the peptidase A31 family. As to quaternary structure, monomer.

It carries out the reaction This enzyme specifically removes a 32-amino acid peptide from the C-terminus of the precursor of the large subunit of E.coli hydrogenase 3 by cleavage at the C-terminal side of Arg-537.. Its function is as follows. Protease involved in the C-terminal processing of HycE, the large subunit of hydrogenase 3. This chain is Hydrogenase 3 maturation protease (hycI), found in Escherichia coli O157:H7.